We begin with the raw amino-acid sequence, 160 residues long: MSEPKQYVMTYEGVKKLEGELEYLKTVKRKEITEKIKVALGYGDLSENSEYDEAKNDQAFTEGKILQLENKLKNAVVVDESEIPKDIVSVGSKVKVKDYDFDEEVEYSIVGSAEADPMSFKISNESPVGKALVGKKIGDIVDVVVPDGISKFEILDIQRG.

The stretch at 49–75 (SEYDEAKNDQAFTEGKILQLENKLKNA) forms a coiled coil.

Belongs to the GreA/GreB family.

Functionally, necessary for efficient RNA polymerase transcription elongation past template-encoded arresting sites. The arresting sites in DNA have the property of trapping a certain fraction of elongating RNA polymerases that pass through, resulting in locked ternary complexes. Cleavage of the nascent transcript by cleavage factors such as GreA or GreB allows the resumption of elongation from the new 3'terminus. GreA releases sequences of 2 to 3 nucleotides. The polypeptide is Transcription elongation factor GreA (Clostridium botulinum (strain Alaska E43 / Type E3)).